The sequence spans 414 residues: Imidazolonepropionase (414 aa).

His73 and His75 together coordinate Fe(3+). Zn(2+)-binding residues include His73 and His75. 4-imidazolone-5-propanoate-binding residues include Arg82, Tyr145, and His178. Tyr145 provides a ligand contact to N-formimidoyl-L-glutamate. His249 provides a ligand contact to Fe(3+). Residue His249 coordinates Zn(2+). Position 252 (Gln252) interacts with 4-imidazolone-5-propanoate. Asp324 is a binding site for Fe(3+). Asp324 serves as a coordination point for Zn(2+). 2 residues coordinate N-formimidoyl-L-glutamate: Asn326 and Gly328. 4-imidazolone-5-propanoate is bound at residue Ser329.

Belongs to the metallo-dependent hydrolases superfamily. HutI family. It depends on Zn(2+) as a cofactor. Requires Fe(3+) as cofactor.

It is found in the cytoplasm. The enzyme catalyses 4-imidazolone-5-propanoate + H2O = N-formimidoyl-L-glutamate. It participates in amino-acid degradation; L-histidine degradation into L-glutamate; N-formimidoyl-L-glutamate from L-histidine: step 3/3. Its function is as follows. Catalyzes the hydrolytic cleavage of the carbon-nitrogen bond in imidazolone-5-propanoate to yield N-formimidoyl-L-glutamate. It is the third step in the universal histidine degradation pathway. The chain is Imidazolonepropionase from Shewanella pealeana (strain ATCC 700345 / ANG-SQ1).